The chain runs to 403 residues: Na(+)-translocating NADH-quinone reductase subunit B (403 aa).

9 helical membrane passes run Met-56–Gly-76, Ala-121–Phe-141, Ile-163–Ile-183, Trp-220–Ile-240, Ile-258–Ile-278, Ile-287–Ser-307, Leu-312–Phe-332, Trp-348–Phe-368, and Gly-371–Ile-391. Thr-230 carries the post-translational modification FMN phosphoryl threonine.

This sequence belongs to the NqrB/RnfD family. As to quaternary structure, composed of six subunits; NqrA, NqrB, NqrC, NqrD, NqrE and NqrF. It depends on FMN as a cofactor.

Its subcellular location is the cell inner membrane. It catalyses the reaction a ubiquinone + n Na(+)(in) + NADH + H(+) = a ubiquinol + n Na(+)(out) + NAD(+). In terms of biological role, NQR complex catalyzes the reduction of ubiquinone-1 to ubiquinol by two successive reactions, coupled with the transport of Na(+) ions from the cytoplasm to the periplasm. NqrA to NqrE are probably involved in the second step, the conversion of ubisemiquinone to ubiquinol. This Stutzerimonas stutzeri (strain A1501) (Pseudomonas stutzeri) protein is Na(+)-translocating NADH-quinone reductase subunit B.